A 381-amino-acid chain; its full sequence is E3 ubiquitin-protein ligase Fancl (381 aa).

Residues 110-293 (NIYYDILALY…MFDLCYFPMP (184 aa)) form a UBC-RWD region (URD) region. The segment at 303–374 (EEDNEELRCN…PFCKAKLSTS (72 aa)) adopts an RING-CH-type; degenerate zinc-finger fold. Zn(2+) contacts are provided by Cys-311, Cys-314, Cys-329, Cys-334, His-339, Cys-342, Cys-364, and Cys-367.

Interacts (via C-terminus) with FANCI and Fancd2.

The protein resides in the nucleus. It carries out the reaction S-ubiquitinyl-[E2 ubiquitin-conjugating enzyme]-L-cysteine + [acceptor protein]-L-lysine = [E2 ubiquitin-conjugating enzyme]-L-cysteine + N(6)-ubiquitinyl-[acceptor protein]-L-lysine.. The protein operates within protein modification; protein ubiquitination. Its function is as follows. Ubiquitin ligase protein that mediates monoubiquitination of Fancd2. Ubiquitination of Fancd2 is stimulated by ionising radiation. Together with Fancd2, and probably FANCI, involved in DNA repair of damage caused by agents that induce interstrand cross-links but not agents that cause double strand breaks. In Drosophila melanogaster (Fruit fly), this protein is E3 ubiquitin-protein ligase Fancl.